Here is a 259-residue protein sequence, read N- to C-terminus: Global transcriptional regulator CodY (259 aa).

The GAF domain stretch occupies residues 1-155; that stretch reads MELLAKTRKL…SSTVVGMEIL (155 aa). The H-T-H motif DNA-binding region spans 203-222; it reads ASKIADRVGITRSVIVNALR. Phosphoserine is present on serine 215.

This sequence belongs to the CodY family.

Its subcellular location is the cytoplasm. Its function is as follows. DNA-binding global transcriptional regulator which is involved in the adaptive response to starvation and acts by directly or indirectly controlling the expression of numerous genes in response to nutrient availability. During rapid exponential growth, CodY is highly active and represses genes whose products allow adaptation to nutrient depletion. The sequence is that of Global transcriptional regulator CodY from Bacillus anthracis (strain A0248).